A 487-amino-acid polypeptide reads, in one-letter code: Glutamyl-tRNA(Gln) amidotransferase subunit A (487 aa).

Residues Lys77 and Ser152 each act as charge relay system in the active site. Ser176 serves as the catalytic Acyl-ester intermediate.

This sequence belongs to the amidase family. GatA subfamily. As to quaternary structure, heterotrimer of A, B and C subunits.

The enzyme catalyses L-glutamyl-tRNA(Gln) + L-glutamine + ATP + H2O = L-glutaminyl-tRNA(Gln) + L-glutamate + ADP + phosphate + H(+). Allows the formation of correctly charged Gln-tRNA(Gln) through the transamidation of misacylated Glu-tRNA(Gln) in organisms which lack glutaminyl-tRNA synthetase. The reaction takes place in the presence of glutamine and ATP through an activated gamma-phospho-Glu-tRNA(Gln). The protein is Glutamyl-tRNA(Gln) amidotransferase subunit A of Lactiplantibacillus plantarum (strain ATCC BAA-793 / NCIMB 8826 / WCFS1) (Lactobacillus plantarum).